Reading from the N-terminus, the 249-residue chain is Probable transcriptional regulatory protein HY04AAS1_0501 (249 aa).

Belongs to the TACO1 family.

The protein resides in the cytoplasm. This is Probable transcriptional regulatory protein HY04AAS1_0501 from Hydrogenobaculum sp. (strain Y04AAS1).